Reading from the N-terminus, the 395-residue chain is 3-sulfinopropanoyl-CoA desulfinase (395 aa).

FAD-binding positions include 121–124 (ICIS), Ser130, and 153–156 (YWIT). 243–244 (YN) provides a ligand contact to substrate. FAD is bound by residues Arg272, Gln339, Ser343, 366–370 (GGTAQ), and Gln387.

The protein belongs to the acyl-CoA dehydrogenase family. As to quaternary structure, homotrimer or homotetramer. It depends on FAD as a cofactor.

It catalyses the reaction 3-sulfinopropanoyl-CoA + H2O = propanoyl-CoA + sulfite + H(+). In terms of biological role, catalyzes the conversion 3-sulfinopropanoyl-CoA (3SP-CoA) to propanoyl-CoA by abstraction of sulfite. Does not show dehydrogenase activity. This is 3-sulfinopropanoyl-CoA desulfinase from Cupriavidus necator (strain ATCC 43291 / DSM 13513 / CCUG 52238 / LMG 8453 / N-1) (Ralstonia eutropha).